Consider the following 450-residue polypeptide: Tol-Pal system protein TolB (450 aa).

A signal peptide spans 1–37 (MIERNGLQRMPFRLNRRHMISGMASAAVLLGSRQALG).

It belongs to the TolB family. In terms of assembly, the Tol-Pal system is composed of five core proteins: the inner membrane proteins TolA, TolQ and TolR, the periplasmic protein TolB and the outer membrane protein Pal. They form a network linking the inner and outer membranes and the peptidoglycan layer.

The protein localises to the periplasm. In terms of biological role, part of the Tol-Pal system, which plays a role in outer membrane invagination during cell division and is important for maintaining outer membrane integrity. This Nitrobacter winogradskyi (strain ATCC 25391 / DSM 10237 / CIP 104748 / NCIMB 11846 / Nb-255) protein is Tol-Pal system protein TolB.